The chain runs to 420 residues: D-inositol 3-phosphate glycosyltransferase (420 aa).

1D-myo-inositol 3-phosphate is bound at residue H13. UDP-N-acetyl-alpha-D-glucosamine contacts are provided by residues 19–20 (QP) and G27. 1D-myo-inositol 3-phosphate-binding positions include 24 to 29 (DAGGMN), K82, Y115, T139, and R159. Residues R233, K238, and V294 each coordinate UDP-N-acetyl-alpha-D-glucosamine. Positions 303, 304, and 306 each coordinate Mg(2+). UDP-N-acetyl-alpha-D-glucosamine is bound by residues E316 and E324. T330 is a Mg(2+) binding site.

Belongs to the glycosyltransferase group 1 family. MshA subfamily. In terms of assembly, homodimer.

The enzyme catalyses 1D-myo-inositol 3-phosphate + UDP-N-acetyl-alpha-D-glucosamine = 1D-myo-inositol 2-acetamido-2-deoxy-alpha-D-glucopyranoside 3-phosphate + UDP + H(+). Catalyzes the transfer of a N-acetyl-glucosamine moiety to 1D-myo-inositol 3-phosphate to produce 1D-myo-inositol 2-acetamido-2-deoxy-glucopyranoside 3-phosphate in the mycothiol biosynthesis pathway. The sequence is that of D-inositol 3-phosphate glycosyltransferase from Pseudarthrobacter chlorophenolicus (strain ATCC 700700 / DSM 12829 / CIP 107037 / JCM 12360 / KCTC 9906 / NCIMB 13794 / A6) (Arthrobacter chlorophenolicus).